The primary structure comprises 987 residues: KAT8 regulatory NSL complex subunit 1-like protein (987 aa).

A Glycyl lysine isopeptide (Lys-Gly) (interchain with G-Cter in SUMO2) cross-link involves residue Lys-134. Ser-462 is modified (phosphoserine). A disordered region spans residues 708 to 738; the sequence is RKKRHLSETALGERTKLEESDFQHTESGSHS. Basic and acidic residues predominate over residues 718–731; it reads LGERTKLEESDFQH. In terms of domain architecture, PEHE spans 794-915; the sequence is EILTPSWRMV…QSQETKSLWW (122 aa). Residue Lys-859 is modified to N6-acetyllysine. A disordered region spans residues 949 to 972; that stretch reads GEIFGTSVPENGHHPKKQSDGMEE. A compositionally biased stretch (basic and acidic residues) spans 959–972; sequence NGHHPKKQSDGMEE.

In terms of processing, acetylated on lysine residues by KAT8 upon ionizing radiation-induced DNA damage; deacetylated by HDAC3.

This Homo sapiens (Human) protein is KAT8 regulatory NSL complex subunit 1-like protein (KANSL1L).